Here is a 288-residue protein sequence, read N- to C-terminus: Probable ketoamine kinase VV1_2562 (288 aa).

92–94 (NFL) lines the ATP pocket. Catalysis depends on Asp195, which acts as the Proton acceptor.

This sequence belongs to the fructosamine kinase family.

Ketoamine kinase that phosphorylates ketoamines on the third carbon of the sugar moiety to generate ketoamine 3-phosphate. This Vibrio vulnificus (strain CMCP6) protein is Probable ketoamine kinase VV1_2562.